The following is a 253-amino-acid chain: uncharacterized protein (253 aa).

An N-terminal signal peptide occupies residues 1-25; that stretch reads MRKKKFLSKVSFGSLFLLCGTVLSA. C26 carries N-palmitoyl cysteine lipidation. C26 is lipidated: S-diacylglycerol cysteine.

The protein belongs to the MG439/MG440 family.

Its subcellular location is the cell membrane. This is an uncharacterized protein from Mycoplasma pneumoniae (strain ATCC 29342 / M129 / Subtype 1) (Mycoplasmoides pneumoniae).